Reading from the N-terminus, the 149-residue chain is Nucleoside diphosphate kinase (149 aa).

ATP-binding residues include Lys-9, Phe-57, Arg-85, Thr-91, Arg-102, and Asn-112. Catalysis depends on His-115, which acts as the Pros-phosphohistidine intermediate.

The protein belongs to the NDK family. In terms of assembly, homotetramer. It depends on Mg(2+) as a cofactor.

The protein localises to the cytoplasm. The enzyme catalyses a 2'-deoxyribonucleoside 5'-diphosphate + ATP = a 2'-deoxyribonucleoside 5'-triphosphate + ADP. It catalyses the reaction a ribonucleoside 5'-diphosphate + ATP = a ribonucleoside 5'-triphosphate + ADP. Its function is as follows. Major role in the synthesis of nucleoside triphosphates other than ATP. The ATP gamma phosphate is transferred to the NDP beta phosphate via a ping-pong mechanism, using a phosphorylated active-site intermediate. The protein is Nucleoside diphosphate kinase of Staphylococcus aureus (strain Mu3 / ATCC 700698).